Consider the following 115-residue polypeptide: Large ribosomal subunit protein uL22 (115 aa).

The protein belongs to the universal ribosomal protein uL22 family. As to quaternary structure, part of the 50S ribosomal subunit.

Functionally, this protein binds specifically to 23S rRNA; its binding is stimulated by other ribosomal proteins, e.g. L4, L17, and L20. It is important during the early stages of 50S assembly. It makes multiple contacts with different domains of the 23S rRNA in the assembled 50S subunit and ribosome. In terms of biological role, the globular domain of the protein is located near the polypeptide exit tunnel on the outside of the subunit, while an extended beta-hairpin is found that lines the wall of the exit tunnel in the center of the 70S ribosome. This Limosilactobacillus reuteri subsp. reuteri (strain JCM 1112) (Lactobacillus reuteri) protein is Large ribosomal subunit protein uL22.